We begin with the raw amino-acid sequence, 229 residues long: Large ribosomal subunit protein uL1 (229 aa).

This sequence belongs to the universal ribosomal protein uL1 family. Part of the 50S ribosomal subunit.

Functionally, binds directly to 23S rRNA. The L1 stalk is quite mobile in the ribosome, and is involved in E site tRNA release. Its function is as follows. Protein L1 is also a translational repressor protein, it controls the translation of the L11 operon by binding to its mRNA. The sequence is that of Large ribosomal subunit protein uL1 from Actinobacillus succinogenes (strain ATCC 55618 / DSM 22257 / CCUG 43843 / 130Z).